Here is a 129-residue protein sequence, read N- to C-terminus: Glycine cleavage system H protein (129 aa).

Residues 24 to 106 (TYTVGITEHA…YAGGWIFKIK (83 aa)) form the Lipoyl-binding domain. Lys-65 is modified (N6-lipoyllysine).

Belongs to the GcvH family. As to quaternary structure, the glycine cleavage system is composed of four proteins: P, T, L and H. It depends on (R)-lipoate as a cofactor.

In terms of biological role, the glycine cleavage system catalyzes the degradation of glycine. The H protein shuttles the methylamine group of glycine from the P protein to the T protein. This is Glycine cleavage system H protein from Escherichia coli O45:K1 (strain S88 / ExPEC).